Consider the following 99-residue polypeptide: Large ribosomal subunit protein uL23 (99 aa).

The protein belongs to the universal ribosomal protein uL23 family. Part of the 50S ribosomal subunit. Contacts protein L29, and trigger factor when it is bound to the ribosome.

In terms of biological role, one of the early assembly proteins it binds 23S rRNA. One of the proteins that surrounds the polypeptide exit tunnel on the outside of the ribosome. Forms the main docking site for trigger factor binding to the ribosome. The polypeptide is Large ribosomal subunit protein uL23 (Clavibacter michiganensis subsp. michiganensis (strain NCPPB 382)).